A 60-amino-acid polypeptide reads, in one-letter code: Mastoparan-VT6 (60 aa).

A signal peptide spans 1–27; the sequence is MKNTILILFTAFIALLGFFGMSAEALA. AXPX repeat units lie at residues 27–30, 31–34, 35–38, and 41–44; these read ADPK, ADPL, AGPN, and ADPE. The propeptide occupies 28–45; the sequence is DPKADPLAGPNPDADPEA. Leu59 bears the Leucine amide mark.

The protein belongs to the MCD family. Mastoparan subfamily. Expressed by the venom gland.

It localises to the secreted. Its function is as follows. The synthetic peptide shows antimicrobial activities against Gram-negative bacteria (but not against all strains tested), Gram-positive bacteria (all strains tested) and the fungi C.albicans and C.parapsilosis. Exhibits little hemolytic activity against washed human erythrocytes. This is Mastoparan-VT6 from Vespa tropica (Greater banded hornet).